A 340-amino-acid chain; its full sequence is 3-isopropylmalate dehydrogenase (340 aa).

Residues R88, R98, R122, and D212 each contribute to the substrate site. Mg(2+) contacts are provided by D212, D236, and D240. Residue 272-284 (GSAPDIAGQGIAD) participates in NAD(+) binding.

The protein belongs to the isocitrate and isopropylmalate dehydrogenases family. LeuB type 2 subfamily. In terms of assembly, homodimer. The cofactor is Mg(2+). Mn(2+) is required as a cofactor.

The protein resides in the cytoplasm. It catalyses the reaction (2R,3S)-3-isopropylmalate + NAD(+) = 4-methyl-2-oxopentanoate + CO2 + NADH. Its pathway is amino-acid biosynthesis; L-leucine biosynthesis; L-leucine from 3-methyl-2-oxobutanoate: step 3/4. In terms of biological role, catalyzes the oxidation of 3-carboxy-2-hydroxy-4-methylpentanoate (3-isopropylmalate) to 3-carboxy-4-methyl-2-oxopentanoate. The product decarboxylates to 4-methyl-2 oxopentanoate. The protein is 3-isopropylmalate dehydrogenase of Corynebacterium glutamicum (strain R).